A 914-amino-acid polypeptide reads, in one-letter code: Isoleucine--tRNA ligase (914 aa).

The short motif at 64–74 (PYANGNFHLGH) is the 'HIGH' region element. Residue Glu-557 participates in L-isoleucyl-5'-AMP binding. The short motif at 598–602 (PMSKS) is the 'KMSKS' region element. ATP is bound at residue Lys-601. Residues Cys-889, Cys-892, Cys-906, and Cys-909 each coordinate Zn(2+).

The protein belongs to the class-I aminoacyl-tRNA synthetase family. IleS type 1 subfamily. In terms of assembly, monomer. It depends on Zn(2+) as a cofactor.

It localises to the cytoplasm. It carries out the reaction tRNA(Ile) + L-isoleucine + ATP = L-isoleucyl-tRNA(Ile) + AMP + diphosphate. In terms of biological role, catalyzes the attachment of isoleucine to tRNA(Ile). As IleRS can inadvertently accommodate and process structurally similar amino acids such as valine, to avoid such errors it has two additional distinct tRNA(Ile)-dependent editing activities. One activity is designated as 'pretransfer' editing and involves the hydrolysis of activated Val-AMP. The other activity is designated 'posttransfer' editing and involves deacylation of mischarged Val-tRNA(Ile). This is Isoleucine--tRNA ligase from Leptospira interrogans serogroup Icterohaemorrhagiae serovar Lai (strain 56601).